The chain runs to 224 residues: MTALTPPQYEAELLQRAKSIAGLTFAELAEELNLVVPPDLKRDKGWVGMLIETALGATAGSKAEQDFSHLGIELKTIPVNQQGYPLETTFVSLAPLAQNSGVTWHSSHVRYKLSKVLWIPIEGERQIPLAERHVGVPILWQPSSSQEQRLRQDWEELMDYIVLGKLTEITARIGEVLQLRPKGANSRALTKGIGKNGEIIDTLPLGFYLRKEFTAEILHDFLMD.

It belongs to the MutH family.

The protein localises to the cytoplasm. Sequence-specific endonuclease that cleaves unmethylated GATC sequences. It is involved in DNA mismatch repair. The polypeptide is DNA mismatch repair protein MutH (Histophilus somni (strain 129Pt) (Haemophilus somnus)).